Reading from the N-terminus, the 708-residue chain is Prolyl 3-hydroxylase 2 (708 aa).

The signal sequence occupies residues 1–24 (MRERIWAPPLLLLLPLLLPPPLWG). 4 TPR repeats span residues 44 to 77 (FDLL…HRRL), 148 to 181 (RVPY…NPEH), 210 to 243 (HMES…YFVE), and 306 to 339 (PLHY…HPDD). Residues Asn449 and Asn549 are each glycosylated (N-linked (GlcNAc...) asparagine). In terms of domain architecture, Fe2OG dioxygenase spans 557–671 (THMVCRTALS…RCAVALWFTL (115 aa)). 3 residues coordinate Fe cation: His580, Asp582, and His652. Arg662 is a catalytic residue. Residues 705–708 (KDEL) carry the Prevents secretion from ER motif.

It belongs to the leprecan family. Requires Fe cation as cofactor. L-ascorbate is required as a cofactor. As to expression, expression localized to the epithelia of bile ducts and to the sacroplasm of heart muscle and skeletal muscle. In the pancreas, localized to a subpopulation of Langerhans islet cells and in the salivary gland, expressed in acinar cells (at protein level). Expressed in adult heart, placenta, lung, liver, skeletal muscle and kidney. Detected in fetal heart, spleen, lung, liver skeletal muscle and kidney.

It localises to the endoplasmic reticulum. The protein localises to the sarcoplasmic reticulum. The protein resides in the golgi apparatus. The catalysed reaction is L-prolyl-[collagen] + 2-oxoglutarate + O2 = trans-3-hydroxy-L-prolyl-[collagen] + succinate + CO2. Inhibited by pyridine 2,4-dicarboxylate, an analog of 2-oxoglutarate. Functionally, prolyl 3-hydroxylase that catalyzes the post-translational formation of 3-hydroxyproline on collagens. Contributes to proline 3-hydroxylation of collagen COL4A1 and COL1A1 in tendons, the eye sclera and in the eye lens capsule. Has high activity with the type IV collagen COL4A1, and lower activity with COL1A1. Catalyzes hydroxylation of the first Pro in Gly-Pro-Hyp sequences where Hyp is 4-hydroxyproline. Has no activity on substrates that lack 4-hydroxyproline in the third position. The polypeptide is Prolyl 3-hydroxylase 2 (Homo sapiens (Human)).